The sequence spans 224 residues: MKPQDLSPPFLWKERRPCIQDGVLYVPRHYFEHQNFSTSYHQEFFQNHTSIACELCSGNGDWVVAQAQKDPQVLWIAVEQRFDRVRKIWSKMINHQIQNLRIVCGTAETFFQYYVPDQFLQRLVVNFPDPWPKMRHRKHRLLQPSFVQEISRSLQDSAVFALATDDKTYLLESIEALQTHLAPRMETPYYIKMTDTYGNSWFENLWRTKGQEIFYTEFIKKAGI.

S-adenosyl-L-methionine is bound by residues E54, E79, and D129. D129 is an active-site residue. Substrate contacts are provided by K133 and D165.

The protein belongs to the class I-like SAM-binding methyltransferase superfamily. TrmB family.

It catalyses the reaction guanosine(46) in tRNA + S-adenosyl-L-methionine = N(7)-methylguanosine(46) in tRNA + S-adenosyl-L-homocysteine. It functions in the pathway tRNA modification; N(7)-methylguanine-tRNA biosynthesis. In terms of biological role, catalyzes the formation of N(7)-methylguanine at position 46 (m7G46) in tRNA. This chain is tRNA (guanine-N(7)-)-methyltransferase, found in Chlamydia pneumoniae (Chlamydophila pneumoniae).